Reading from the N-terminus, the 438-residue chain is Telomeric repeat-binding factor 1 (438 aa).

A compositionally biased stretch (polar residues) spans Met1–Pro10. The disordered stretch occupies residues Met1–Gln36. Position 2 is an N-acetylalanine (Ala2). Ser11 carries the post-translational modification Phosphoserine. The tract at residues Glu58–Arg268 is TRFH dimerization. Lys213 participates in a covalent cross-link: Glycyl lysine isopeptide (Lys-Gly) (interchain with G-Cter in SUMO2). Phosphoserine; by ATM is present on Ser219. Positions Glu265 to Arg378 are interaction with RLIM. Positions Arg268–Thr311 are disordered. A compositionally biased stretch (polar residues) spans Asp299–Thr311. A Glycyl lysine isopeptide (Lys-Gly) (interchain with G-Cter in SUMO2) cross-link involves residue Lys325. Residues Leu326 to His375 are disordered. The Nuclear localization signal signature appears at Lys337–Arg356. Residue Lys366 forms a Glycyl lysine isopeptide (Lys-Gly) (interchain with G-Cter in SUMO2) linkage. The HTH myb-type domain maps to His375–Leu432. A DNA-binding region (H-T-H motif) is located at residues Trp403 to Lys428.

In terms of assembly, homodimer; can contain both isoforms. Found in a complex with POT1; TINF2 and TNKS1. Interacts with ATM, TINF2, TNKS1, TNKS2, PINX1, NEK2 and MAPRE1. Component of the shelterin complex (telosome) composed of TERF1, TERF2, TINF2, TERF2IP ACD and POT1. Interacts with RLIM (via N-terminus). Interacts with FBXO4. Interaction with TINF2 protects against interaction with FBXO4 and subsequent polyubiquitination and proteasomal degradation. Interacts with GNL3L; this interaction promotes homodimerization. Interacts with TIN2. Interactions with GNL3L and TIN2 are mutually exclusive. Interacts with RTEL1. Interacts with CCDC79/TERB1. Post-translationally, phosphorylated preferentially on Ser-219 in an ATM-dependent manner in response to ionizing DNA damage. ADP-ribosylation by TNKS1 or TNKS2 diminishes its ability to bind to telomeric DNA. In terms of processing, ubiquitinated by RLIM/RNF12, leading to its degradation by the proteasome. Ubiquitinated by a SCF (SKP1-CUL1-F-box protein) ubiquitin-protein ligase complex, leading to its degradation by the proteasome.

Its subcellular location is the nucleus. It is found in the chromosome. The protein localises to the telomere. It localises to the cytoplasm. The protein resides in the cytoskeleton. Its subcellular location is the spindle. Functionally, binds the telomeric double-stranded 5'-TTAGGG-3' repeat and negatively regulates telomere length. Involved in the regulation of the mitotic spindle. Component of the shelterin complex (telosome) that is involved in the regulation of telomere length and protection. Shelterin associates with arrays of double-stranded 5'-TTAGGG-3' repeats added by telomerase and protects chromosome ends; without its protective activity, telomeres are no longer hidden from the DNA damage surveillance and chromosome ends are inappropriately processed by DNA repair pathways. The protein is Telomeric repeat-binding factor 1 (TERF1) of Cricetulus griseus (Chinese hamster).